The chain runs to 217 residues: Zinc finger CCHC-type and RNA-binding motif-containing protein 1 (217 aa).

Residues 10-88 (STVYVSNLPF…RVIKASIAID (79 aa)) form the RRM domain. The segment at 105–122 (SKCYECGESGHLSYACPK) adopts a CCHC-type zinc-finger fold. Positions 120-217 (CPKNMLGERE…YFSDEEELSD (98 aa)) are disordered. Residues 145-163 (PEEEIEEVEVSEEEGEDPA) are compositionally biased toward acidic residues. Residues Ser155, Ser210, and Ser216 each carry the phosphoserine modification.

Component of the U11/U12 snRNPs that are part of the U12-type spliceosome. Interacts with ZRSR1. As to expression, expressed at higher level in heart and testis, and at lower level in cerebellum. Weakly expressed at low level in liver.

It localises to the nucleus. It is found in the nucleoplasm. This Mus musculus (Mouse) protein is Zinc finger CCHC-type and RNA-binding motif-containing protein 1 (Zcrb1).